Consider the following 396-residue polypeptide: NADH-quinone oxidoreductase subunit D (396 aa).

The protein belongs to the complex I 49 kDa subunit family. NDH-1 is composed of 14 different subunits. Subunits NuoB, C, D, E, F, and G constitute the peripheral sector of the complex.

The protein resides in the cell inner membrane. The enzyme catalyses a quinone + NADH + 5 H(+)(in) = a quinol + NAD(+) + 4 H(+)(out). Its function is as follows. NDH-1 shuttles electrons from NADH, via FMN and iron-sulfur (Fe-S) centers, to quinones in the respiratory chain. The immediate electron acceptor for the enzyme in this species is believed to be ubiquinone. Couples the redox reaction to proton translocation (for every two electrons transferred, four hydrogen ions are translocated across the cytoplasmic membrane), and thus conserves the redox energy in a proton gradient. In Bartonella quintana (strain Toulouse) (Rochalimaea quintana), this protein is NADH-quinone oxidoreductase subunit D.